Here is a 485-residue protein sequence, read N- to C-terminus: GTPase Obg (485 aa).

The Obg domain maps to 2-159 (PRFVDRVVIH…RDLTLELKTV (158 aa)). An OBG-type G domain is found at 160–341 (ADVGLIGFPS…LIFALWEMVK (182 aa)). Residues 166–173 (GFPSAGKS), 191–195 (FTTLV), 212–215 (DVPG), 292–295 (NKID), and 322–324 (STV) each bind GTP. Residues Ser-173 and Thr-193 each contribute to the Mg(2+) site. In terms of domain architecture, OCT spans 359–437 (PIPVDESGFT…IGDVTFDWEP (79 aa)). The interval 450-485 (RGTDIRLEQTDRVGAAERKAARRERRQPGESGGEDS) is disordered. Residues 452-468 (TDIRLEQTDRVGAAERK) show a composition bias toward basic and acidic residues.

This sequence belongs to the TRAFAC class OBG-HflX-like GTPase superfamily. OBG GTPase family. As to quaternary structure, monomer. The cofactor is Mg(2+).

It localises to the cytoplasm. An essential GTPase which binds GTP, GDP and possibly (p)ppGpp with moderate affinity, with high nucleotide exchange rates and a fairly low GTP hydrolysis rate. Plays a role in control of the cell cycle, stress response, ribosome biogenesis and in those bacteria that undergo differentiation, in morphogenesis control. The sequence is that of GTPase Obg from Mycolicibacterium smegmatis (strain ATCC 700084 / mc(2)155) (Mycobacterium smegmatis).